The chain runs to 100 residues: NAD(P)H-quinone oxidoreductase subunit 4L, chloroplastic (100 aa).

3 helical membrane-spanning segments follow: residues 1 to 21, 27 to 47, and 61 to 81; these read MIEN…YGLI, IKVL…LVAF, and FAVF…AIVF.

The protein belongs to the complex I subunit 4L family. NDH is composed of at least 16 different subunits, 5 of which are encoded in the nucleus.

The protein localises to the plastid. The protein resides in the chloroplast thylakoid membrane. It carries out the reaction a plastoquinone + NADH + (n+1) H(+)(in) = a plastoquinol + NAD(+) + n H(+)(out). The enzyme catalyses a plastoquinone + NADPH + (n+1) H(+)(in) = a plastoquinol + NADP(+) + n H(+)(out). In terms of biological role, NDH shuttles electrons from NAD(P)H:plastoquinone, via FMN and iron-sulfur (Fe-S) centers, to quinones in the photosynthetic chain and possibly in a chloroplast respiratory chain. The immediate electron acceptor for the enzyme in this species is believed to be plastoquinone. Couples the redox reaction to proton translocation, and thus conserves the redox energy in a proton gradient. The sequence is that of NAD(P)H-quinone oxidoreductase subunit 4L, chloroplastic from Chaetosphaeridium globosum (Charophycean green alga).